We begin with the raw amino-acid sequence, 172 residues long: Disulfide bond formation protein B (172 aa).

Residues 1–16 (MNLFASLNQFSKNRIS) are Cytoplasmic-facing. A helical transmembrane segment spans residues 17-33 (WLLLLLFVVFFEGAALF). At 34-51 (FQHVMMLSPCVMCIYERV) the chain is on the periplasmic side. C43 and C46 are joined by a disulfide. The helical transmembrane segment at 52–67 (AMLGVGGAALFGLIAP) threads the bilayer. Over 68-74 (NNPLVRW) the chain is Cytoplasmic. Residues 75 to 92 (LGLAAWGASAYKGLALSL) traverse the membrane as a helical segment. Residues 93–147 (QHVDYQFNPSPFATCDLFVTFPDWAPLNQWAPWMFEAYGDCSKIVWQFMTLSMPQ) are Periplasmic-facing. C107 and C133 are oxidised to a cystine. The helical transmembrane segment at 148–166 (WLVIIFAGNLVALAFIVIA) threads the bilayer. Residues 167-172 (QFFKSK) lie on the Cytoplasmic side of the membrane.

It belongs to the DsbB family.

Its subcellular location is the cell inner membrane. Functionally, required for disulfide bond formation in some periplasmic proteins. Acts by oxidizing the DsbA protein. The polypeptide is Disulfide bond formation protein B (Vibrio vulnificus (strain CMCP6)).